A 141-amino-acid polypeptide reads, in one-letter code: Large ribosomal subunit protein uL11 (141 aa).

The protein belongs to the universal ribosomal protein uL11 family. Part of the ribosomal stalk of the 50S ribosomal subunit. Interacts with L10 and the large rRNA to form the base of the stalk. L10 forms an elongated spine to which L12 dimers bind in a sequential fashion forming a multimeric L10(L12)X complex. Post-translationally, one or more lysine residues are methylated.

Forms part of the ribosomal stalk which helps the ribosome interact with GTP-bound translation factors. The chain is Large ribosomal subunit protein uL11 from Streptococcus pneumoniae (strain Hungary19A-6).